Consider the following 643-residue polypeptide: Threonine--tRNA ligase (643 aa).

The region spanning 1 to 61 (MPTIKFIDGT…TNDSIVKFVY (61 aa)) is the TGS domain. Residues 244 to 535 (DHRKISKILD…LIEEYIGNFP (292 aa)) form a catalytic region. C335, H386, and H512 together coordinate Zn(2+).

This sequence belongs to the class-II aminoacyl-tRNA synthetase family. Homodimer. Zn(2+) serves as cofactor.

The protein localises to the cytoplasm. It catalyses the reaction tRNA(Thr) + L-threonine + ATP = L-threonyl-tRNA(Thr) + AMP + diphosphate + H(+). Its function is as follows. Catalyzes the attachment of threonine to tRNA(Thr) in a two-step reaction: L-threonine is first activated by ATP to form Thr-AMP and then transferred to the acceptor end of tRNA(Thr). Also edits incorrectly charged L-seryl-tRNA(Thr). This chain is Threonine--tRNA ligase, found in Buchnera aphidicola subsp. Baizongia pistaciae (strain Bp).